The primary structure comprises 76 residues: Protein sprouty homolog 1 (76 aa).

An SPR domain is found at 1–52 (NPCSCSQSHCCSRYLCMGAMSLFLPCLLCYPPAKGCLKLCRGCYDRVNRPGC).

The protein belongs to the sprouty family. As to expression, brain and interlimb region.

Its subcellular location is the cytoplasm. The protein resides in the membrane. Its function is as follows. Inhibits fibroblast growth factor (FGF)-induced retinal lens fiber differentiation. Inhibits TGFB-induced epithelial-to-mesenchymal transition in lens epithelial cells. This Gallus gallus (Chicken) protein is Protein sprouty homolog 1 (SPRY1).